Reading from the N-terminus, the 1391-residue chain is Periaxin (1391 aa).

Position 7 is a phosphoserine (Ser-7). A PDZ domain is found at 16 to 99 (LVEIIVETEA…YKVSFCLKRT (84 aa)). The Nuclear export signal motif lies at 70–84 (VFFENFKYEDALRLL). Residues 118–196 (KGPRAKVAKL…RLQLPRLRVR (79 aa)) carry the Nuclear localization signal motif. Ser-243 is modified (phosphoserine). 12 consecutive repeat copies span residues 432-436 (GPEVK), 440-444 (GPEVK), 448-452 (VPEVK), 456-460 (VPEAA), 464-468 (VQLPE), 469-473 (VQLPK), 474-478 (MSDMK), 482-486 (IPEMV), 487-491 (VPDVR), 495-499 (VQLPK), 500-504 (VPEMK), and 508-512 (MKLPK). Residues 432–719 (GPEVKAPTGP…MQVSQVPEVQ (288 aa)) are 45 X 5 AA approximate tandem repeats of [LVMGIED]-[PQSKHARMI]-[EDKLVTR]-[LIVMAP]-[AQKHRPEVSD]; that may have a tripeptide spacer of [LVIDEA]-[PMSVI]-[KEATDQ]. One copy of the 13; approximate repeat lies at 513–517 (WPEMA). 32 repeat units span residues 521–525 (VHLPD), 526–530 (VQLPK), 534–538 (MKLPK), 539–543 (VPEMA), 547–551 (VHLPD), 552–556 (VQLPK), 560–564 (MKLPE), 565–569 (MKLPK), 573–577 (MAVPD), 578–582 (VRLPE), 583–587 (VQLPK), 591–595 (VKLPK), 596–600 (MPEMA), 601–605 (VPDVH), 609–613 (LQLPK), 614–618 (MSEVK), 619–623 (LPKMP), 627–631 (VPDVR), 632–636 (LPEVQ), 637–641 (LPKVS), 645–649 (LPKMP), 650–654 (EMTMP), 655–659 (DIRLP), 663–667 (LPKVP), 671–675 (LPEMK), 676–680 (LPEIK), 684–688 (VPDMA), 689–693 (VPDVP), 697–701 (LQLPK), 702–706 (VSDIR), 707–711 (LPEMQ), and 715–719 (VPEVQ). A phosphoserine mark is found at Ser-848, Ser-979, Ser-1028, Ser-1279, Ser-1283, Ser-1285, Ser-1293, Ser-1331, and Ser-1337. The interval 1267-1366 (LPRVGFSQSE…DREEGGFRVR (100 aa)) is disordered. Residues 1275 to 1285 (SESVSGEGSPS) are compositionally biased toward low complexity. Residues 1354-1363 (GSRDREEGGF) show a composition bias toward basic and acidic residues. Position 1369 is a phosphoserine (Ser-1369).

Belongs to the periaxin family. As to quaternary structure, homodimer (via PDZ domain). Interacts with SCN10A. Found in a complex with SCN10A. Interacts with DRP2. Identified in a dystroglycan complex that contains at least PRX, DRP2, UTRN, DMD and DAG1. Detected in a complex composed of at least EZR, AHNAK, PPL and PRX. Identified in a complex with EZR, AHNAK, BFSP1, BFSP2, ANK2, PLEC, VIM and spectrin. As to expression, detected in myelinating Schwann cells in intramuscular nerves in triangularis sterni. Detected in sciatic nerve. Detected in eye lens fiber cells. Isoform 1 is detected in myelinating Schwann cells in sciatic nerve. Isoform 2 is detected in myelinating Schwann cells in sciatic nerve (at protein level). Detected in sciatic nerve.

The protein localises to the cell membrane. The protein resides in the cell junction. It is found in the nucleus. Its subcellular location is the cytoplasm. Functionally, scaffolding protein that functions as part of a dystroglycan complex in Schwann cells, and as part of EZR and AHNAK-containing complexes in eye lens fiber cells. Required for the maintenance of the peripheral myelin sheath that is essential for normal transmission of nerve impulses and normal perception of sensory stimuli. Required for normal transport of MBP mRNA from the perinuclear to the paranodal regions. Required for normal remyelination after nerve injury. Required for normal elongation of Schwann cells and normal length of the internodes between the nodes of Ranvier. The demyelinated nodes of Ranvier permit saltatory transmission of nerve impulses; shorter internodes cause slower transmission of nerve impulses. Required for the formation of appositions between the abaxonal surface of the myelin sheath and the Schwann cell plasma membrane; the Schwann cell cytoplasm is restricted to regions between these appositions. Required for the formation of Cajal bands and of Schmidt-Lanterman incisures that correspond to short, cytoplasm-filled regions on myelinated nerves. Recruits DRP2 to the Schwann cell plasma membrane. Required for normal protein composition of the eye lens fiber cell plasma membrane and normal eye lens fiber cell morphology. The sequence is that of Periaxin (Prx) from Mus musculus (Mouse).